We begin with the raw amino-acid sequence, 526 residues long: MNTSASPVPGLFTLVLHTHLPWLAHHGRWPVGEEWLYQSWAAAYLPLLQVLAALADENRHRLITLGMTPVVNAQLDDPYCLNGVHHWLANWQLRAEEAASVRYARQSKSADYPSCTPEALRAFGIRECADAARALDNFATRWRHGGSPLLRGLIDAGTVELLGGPLAHPFQPLLAPRLREFALREGLADAQLRLAHRPKGIWAPECAYAPGMEVDYATAGVSHFMVDGPSLHGDTALGRPVGKTDVVAFGRDLQVSYRVWSPKSGYPGHAAYRDFHTYDHLTGLKPARVTGRNVPSEQKAPYDPERADRAVDVHVADFVDVVRNRLLSESERIGRPAHVIAAFDTELFGHWWYEGPTWLQRVLRALPAAGVRVGTLSDAIADGFVGDPVELPPSSWGSGKDWQVWSGAKVADLVQLNSEVVDTALTTIDKALAQTASLDGPLPRDHVADQILRETLLTVSSDWPFMVSKDSAADYARYRAHLHAHATREIAGALAAGRRDTARRLAEGWNRADGLFGALDARRLPK.

Residue glutamate 205 is the Nucleophile of the active site. Substrate is bound by residues arginine 251 and glycine 268. The Proton donor role is filled by aspartate 344. Substrate-binding residues include tryptophan 396 and aspartate 462.

This sequence belongs to the glycosyl hydrolase 57 family.

The catalysed reaction is Transfers a segment of a (1-&gt;4)-alpha-D-glucan chain to a primary hydroxy group in a similar glucan chain.. In terms of biological role, catalyzes the formation of branch points in alpha-glucans by cleavage of an alpha-1,4 glycosidic bond and subsequent transfer of the cleaved-off oligosaccharide to a new alpha-1,6 position. Is probably involved in the biosynthesis of 6-O-methylglucosyl lipopolysaccharides (MGLP). In Mycobacterium tuberculosis (strain CDC 1551 / Oshkosh), this protein is Probable 1,4-alpha-glucan branching enzyme MT3115.